Here is a 374-residue protein sequence, read N- to C-terminus: Cell wall integrity and stress response component 1 (374 aa).

The first 29 residues, 1–29, serve as a signal peptide directing secretion; it reads MVFLNSSPFKGRLLFFVYLLIISTRLVAA. Residues 30 to 292 lie on the Extracellular side of the membrane; the sequence is DMNTQYGCYL…SNHTSLNAGA (263 aa). In terms of domain architecture, WSC spans 31 to 119; the sequence is MNTQYGCYLV…DLYWSVYLTG (89 aa). Residues 132 to 236 form a disordered region; that stretch reads VSSTTSSSSS…SSSSSSRPSS (105 aa). N-linked (GlcNAc...) asparagine glycosylation is found at asparagine 278 and asparagine 284. The chain crosses the membrane as a helical span at residues 293–313; that stretch reads IVGIVIGCVAFAVVMALCIFL. The Cytoplasmic portion of the chain corresponds to 314–374; it reads YFYFRRFKIR…RKILRVTNLN (61 aa). The residue at position 354 (serine 354) is a Phosphoserine.

Post-translationally, O-mannosylated.

The protein localises to the membrane. This is Cell wall integrity and stress response component 1 (wsc1) from Schizosaccharomyces pombe (strain 972 / ATCC 24843) (Fission yeast).